The following is a 1363-amino-acid chain: DNA-directed RNA polymerase subunit beta (1363 aa).

Belongs to the RNA polymerase beta chain family. As to quaternary structure, the RNAP catalytic core consists of 2 alpha, 1 beta, 1 beta' and 1 omega subunit. When a sigma factor is associated with the core the holoenzyme is formed, which can initiate transcription.

It carries out the reaction RNA(n) + a ribonucleoside 5'-triphosphate = RNA(n+1) + diphosphate. DNA-dependent RNA polymerase catalyzes the transcription of DNA into RNA using the four ribonucleoside triphosphates as substrates. This is DNA-directed RNA polymerase subunit beta from Syntrophus aciditrophicus (strain SB).